The following is a 306-amino-acid chain: MPNPLYRQHIISISDLSREQLEYLLQTALKLKAHPRGDLLEGKLIGSCFFEPSTRTRLSFETAVQRLGGKVIGFSDGANTSAKKGETLADTARIISGYTDAIVQRHPKDGAARVAAEFSRVPVINAGDGTNQHPSQTLLDLVTIYETQGRLDKLKIAMAGDLKYGRTVHSLCQALKRWGCEFAFVSPPSLAMPDYITEELEEADCRYRALGSLEEAAEWADILYMTRVQRERFDEQEFAKIQGKFNLEASMLARAKPNLRVLHPLPRTDEIHPDVDAAPHAYYFEQATNGVYARMAILSLVLNEEV.

Residues arginine 55 and threonine 56 each contribute to the carbamoyl phosphate site. Lysine 84 lines the L-aspartate pocket. Arginine 105, histidine 133, and glutamine 136 together coordinate carbamoyl phosphate. 2 residues coordinate L-aspartate: arginine 166 and arginine 227. Carbamoyl phosphate contacts are provided by leucine 265 and proline 266.

It belongs to the aspartate/ornithine carbamoyltransferase superfamily. ATCase family. In terms of assembly, heterododecamer (2C3:3R2) of six catalytic PyrB chains organized as two trimers (C3), and six regulatory PyrI chains organized as three dimers (R2).

It catalyses the reaction carbamoyl phosphate + L-aspartate = N-carbamoyl-L-aspartate + phosphate + H(+). It functions in the pathway pyrimidine metabolism; UMP biosynthesis via de novo pathway; (S)-dihydroorotate from bicarbonate: step 2/3. Its function is as follows. Catalyzes the condensation of carbamoyl phosphate and aspartate to form carbamoyl aspartate and inorganic phosphate, the committed step in the de novo pyrimidine nucleotide biosynthesis pathway. The protein is Aspartate carbamoyltransferase catalytic subunit of Neisseria gonorrhoeae (strain ATCC 700825 / FA 1090).